The chain runs to 83 residues: MSVRLAPDGTYVYGQPMLAPNGTYVGGGAPRLAPDGTYVGGVPRLAPNGSYVAGRPTLAPDGTYVGGRYHLAPDGTYVGDGSE.

This is an uncharacterized protein from Escherichia phage 186 (Bacteriophage 186).